We begin with the raw amino-acid sequence, 416 residues long: 5-methylthioadenosine/S-adenosylhomocysteine deaminase 2 (416 aa).

Zn(2+)-binding residues include histidine 58 and histidine 60. Residues glutamate 86 and histidine 178 each contribute to the substrate site. Histidine 205 provides a ligand contact to Zn(2+). Substrate contacts are provided by glutamate 208 and aspartate 293. Aspartate 293 is a Zn(2+) binding site.

Belongs to the metallo-dependent hydrolases superfamily. MTA/SAH deaminase family. The cofactor is Zn(2+).

It catalyses the reaction S-adenosyl-L-homocysteine + H2O + H(+) = S-inosyl-L-homocysteine + NH4(+). It carries out the reaction S-methyl-5'-thioadenosine + H2O + H(+) = S-methyl-5'-thioinosine + NH4(+). Catalyzes the deamination of 5-methylthioadenosine and S-adenosyl-L-homocysteine into 5-methylthioinosine and S-inosyl-L-homocysteine, respectively. Is also able to deaminate adenosine. The sequence is that of 5-methylthioadenosine/S-adenosylhomocysteine deaminase 2 from Archaeoglobus fulgidus (strain ATCC 49558 / DSM 4304 / JCM 9628 / NBRC 100126 / VC-16).